The chain runs to 354 residues: L-lactate dehydrogenase (354 aa).

NAD(+)-binding positions include 73–78 (DAVPDK) and R120. Residues R127, N159, and R190 each coordinate substrate. N159 contributes to the NAD(+) binding site. Catalysis depends on H214, which acts as the Proton acceptor. Substrate is bound at residue T269. The disordered stretch occupies residues 302–332 (HGIPDGTTSSSACPPRRPRRRPGRREMELTE).

The protein belongs to the LDH/MDH superfamily. LDH family. As to quaternary structure, homotetramer.

It carries out the reaction (S)-lactate + NAD(+) = pyruvate + NADH + H(+). It participates in fermentation; pyruvate fermentation to lactate; (S)-lactate from pyruvate: step 1/1. This chain is L-lactate dehydrogenase, found in Zea mays (Maize).